We begin with the raw amino-acid sequence, 67 residues long: Sodium channel neurotoxin MeuNaTxalpha-10 (67 aa).

Positions 2–66 (RDGYIAKPHN…VPIRIPGKCH (65 aa)) constitute an LCN-type CS-alpha/beta domain. Cystine bridges form between Cys12–Cys65, Cys16–Cys38, Cys24–Cys48, and Cys28–Cys50. Arg67 is a propeptide (removed by a carboxypeptidase).

The protein belongs to the long (4 C-C) scorpion toxin superfamily. Sodium channel inhibitor family. Alpha subfamily. Expressed by the venom gland.

The protein localises to the secreted. In terms of biological role, alpha toxins bind voltage-independently at site-3 of sodium channels (Nav) and inhibit the inactivation of the activated channels, thereby blocking neuronal transmission. This Mesobuthus eupeus (Lesser Asian scorpion) protein is Sodium channel neurotoxin MeuNaTxalpha-10.